A 471-amino-acid chain; its full sequence is MDILCEENTSLSSTTNSLMQLNDDTRLYSNDFNSGEANTSDAFNWTVDSENRTNLSCEGCLSPSCLSLLHLQEKNWSALLTAVVIILTIAGNILVIMAVSLEKKLQNATNYFLMSLAIADMLLGFLVMPVSMLTILYGYRWPLPSKLCAVWIYLDVLFSTASIMHLCAISLDRYVAIQNPIHHSRFNSRTKAFLKIIAVWTISVGISMPIPVFGLQDDSKVFKEGSCLLADDNFVLIGSFVSFFIPLTIMVITYFLTIKSLQKEATLCVSDLGTRAKLASFSFLPQSSLSSEKLFQRSIHREPGSYTGRRTMQSISNEQKACKVLGIVFFLFVVMWCPFFITNIMAVICKESCNEDVIGALLNVFVWIGYLSSAVNPLVYTLFNKTYRSAFSRYIQCQYKENKKPLQLILVNTIPALAYKSSQLQMGQKKNSKQDAKTTDNDCSMVALGKQHSEEASKDNSDGVNEKVSCV.

The Extracellular segment spans residues 1–80 (MDILCEENTS…LQEKNWSALL (80 aa)). Residues N8, N38, N44, N51, and N54 are each glycosylated (N-linked (GlcNAc...) asparagine). A helical membrane pass occupies residues 81 to 97 (TAVVIILTIAGNILVIM). The Cytoplasmic portion of the chain corresponds to 98-111 (AVSLEKKLQNATNY). The chain crosses the membrane as a helical span at residues 112-137 (FLMSLAIADMLLGFLVMPVSMLTILY). The Extracellular portion of the chain corresponds to 138–146 (GYRWPLPSK). A helical transmembrane segment spans residues 147-171 (LCAVWIYLDVLFSTASIMHLCAISL). A disulfide bridge connects residues C148 and C227. A serotonin-binding site is contributed by D155. The short motif at 172–174 (DRY) is the DRY motif; important for ligand-induced conformation changes element. Topologically, residues 172 to 191 (DRYVAIQNPIHHSRFNSRTK) are cytoplasmic. Residues 192–215 (AFLKIIAVWTISVGISMPIPVFGL) form a helical membrane-spanning segment. Over 216–232 (QDDSKVFKEGSCLLADD) the chain is Extracellular. The chain crosses the membrane as a helical span at residues 233–258 (NFVLIGSFVSFFIPLTIMVITYFLTI). Over 259-322 (KSLQKEATLC…QSISNEQKAC (64 aa)) the chain is Cytoplasmic. S280 carries the post-translational modification Phosphoserine. Residues 323–348 (KVLGIVFFLFVVMWCPFFITNIMAVI) form a helical membrane-spanning segment. N343 lines the serotonin pocket. Residues C349 and C353 are joined by a disulfide bond. At 349–356 (CKESCNED) the chain is on the extracellular side. A helical membrane pass occupies residues 357 to 382 (VIGALLNVFVWIGYLSSAVNPLVYTL). The short motif at 376–380 (NPLVY) is the NPxxY motif; important for ligand-induced conformation changes and signaling element. The Cytoplasmic portion of the chain corresponds to 383–471 (FNKTYRSAFS…DGVNEKVSCV (89 aa)). A compositionally biased stretch (basic and acidic residues) spans 451-465 (QHSEEASKDNSDGVN). The segment at 451 to 471 (QHSEEASKDNSDGVNEKVSCV) is disordered. The short motif at 469 to 471 (SCV) is the PDZ-binding element.

The protein belongs to the G-protein coupled receptor 1 family. Interacts (via C-terminus) with MPDZ and PATJ. May interact (via C-terminus) with MPP3, PRDX6, DLG4, DLG1, CASK, APBA1 and MAGI2. Interacts with GRM2 and DRD2; this may affect signaling. Detected in brain cortex (at protein level). Detected in blood platelets.

Its subcellular location is the cell membrane. The protein resides in the cell projection. It is found in the dendrite. It localises to the axon. The protein localises to the cytoplasmic vesicle. Its subcellular location is the membrane. The protein resides in the caveola. It is found in the presynapse. G-protein coupled receptor activity is regulated by lipids: oleamide increases HTR2A-mediated activity. Inhibited by IHCH-7179 small molecule: IHCH-7179 acts both as an agonist activator for HTR1A and as an antagonist inhibitor for HTR2A. In terms of biological role, G-protein coupled receptor for 5-hydroxytryptamine (serotonin). Also functions as a receptor for various drugs and psychoactive substances, including mescaline, psilocybin, 1-(2,5-dimethoxy-4-iodophenyl)-2-aminopropane (DOI) and lysergic acid diethylamide (LSD). Ligand binding causes a conformation change that triggers signaling via guanine nucleotide-binding proteins (G proteins) and modulates the activity of downstream effectors. HTR2A is coupled to G(q)/G(11) G alpha proteins and activates phospholipase C-beta, releasing diacylglycerol (DAG) and inositol 1,4,5-trisphosphate (IP3) second messengers that modulate the activity of phosphatidylinositol 3-kinase and promote the release of Ca(2+) ions from intracellular stores, respectively. Beta-arrestin family members inhibit signaling via G proteins and mediate activation of alternative signaling pathways. Affects neural activity, perception, cognition and mood. Plays a role in the regulation of behavior, including responses to anxiogenic situations and psychoactive substances. Plays a role in intestinal smooth muscle contraction, and may play a role in arterial vasoconstriction. Its function is as follows. (Microbial infection) Acts as a receptor for human JC polyomavirus/JCPyV. The protein is 5-hydroxytryptamine receptor 2A of Homo sapiens (Human).